A 416-amino-acid polypeptide reads, in one-letter code: 3-isopropylmalate dehydratase large subunit (416 aa).

3 residues coordinate [4Fe-4S] cluster: Cys299, Cys357, and Cys360.

It belongs to the aconitase/IPM isomerase family. LeuC type 2 subfamily. As to quaternary structure, heterodimer of LeuC and LeuD. It depends on [4Fe-4S] cluster as a cofactor.

The enzyme catalyses (2R,3S)-3-isopropylmalate = (2S)-2-isopropylmalate. It functions in the pathway amino-acid biosynthesis; L-leucine biosynthesis; L-leucine from 3-methyl-2-oxobutanoate: step 2/4. Functionally, catalyzes the isomerization between 2-isopropylmalate and 3-isopropylmalate, via the formation of 2-isopropylmaleate. The sequence is that of 3-isopropylmalate dehydratase large subunit from Saccharolobus solfataricus (strain ATCC 35092 / DSM 1617 / JCM 11322 / P2) (Sulfolobus solfataricus).